A 416-amino-acid polypeptide reads, in one-letter code: Adenylosuccinate synthetase (416 aa).

GTP is bound by residues 11-17 and 39-41; these read GDEGKGK and GHT. Aspartate 12 functions as the Proton acceptor in the catalytic mechanism. Mg(2+)-binding residues include aspartate 12 and glycine 39. Residues 12–15, 37–40, threonine 125, arginine 139, glutamine 214, threonine 229, and arginine 290 contribute to the IMP site; these read DEGK and NAGH. Histidine 40 acts as the Proton donor in catalysis. 286–292 contacts substrate; it reads TTTGRPR. GTP-binding positions include arginine 292, 318–320, and 405–407; these read KLD and SLG.

This sequence belongs to the adenylosuccinate synthetase family. In terms of assembly, homodimer. Requires Mg(2+) as cofactor.

It is found in the cytoplasm. It catalyses the reaction IMP + L-aspartate + GTP = N(6)-(1,2-dicarboxyethyl)-AMP + GDP + phosphate + 2 H(+). The protein operates within purine metabolism; AMP biosynthesis via de novo pathway; AMP from IMP: step 1/2. In terms of biological role, plays an important role in the de novo pathway of purine nucleotide biosynthesis. Catalyzes the first committed step in the biosynthesis of AMP from IMP. This chain is Adenylosuccinate synthetase, found in Picrophilus torridus (strain ATCC 700027 / DSM 9790 / JCM 10055 / NBRC 100828 / KAW 2/3).